The sequence spans 216 residues: Pathogenicity-related ORF2 (216 aa).

4 helical membrane passes run 6-26 (VGSLLLVVVIMLGLLPFAAMV), 55-75 (LNGVALLVSCFVMAPVGMEAF), 157-177 (IGFLLYLVFIVIDLVVANALM), and 193-213 (FKLLLFVAMDGWSMLIHGLVL).

Belongs to the FliP/MopC/SpaP family.

It localises to the cell membrane. In terms of biological role, important for pathogenicity. The protein is Pathogenicity-related ORF2 of Xanthomonas campestris pv. glycines.